We begin with the raw amino-acid sequence, 276 residues long: Malectin-A (276 aa).

The first 26 residues, 1 to 26, serve as a signal peptide directing secretion; that stretch reads MLSIRTVLGPLATILLTVLGPFGAHG. The Lumenal segment spans residues 27-253; that stretch reads SGLADKVIWA…TPNPYASDNS (227 aa). Residues Y67, Y89, Y116, F117, and D186 each contribute to the a carbohydrate site. The segment at 204–247 is disordered; the sequence is PMLQPHPGLEKKEEEEEEEEEEGSTSKKQINKNRVQSGPRTPNP. The segment covering 216–226 has biased composition (acidic residues); sequence EEEEEEEEEEG. Positions 229–247 are enriched in polar residues; the sequence is SKKQINKNRVQSGPRTPNP. Residue N252 is glycosylated (N-linked (GlcNAc...) asparagine). Residues 254 to 274 traverse the membrane as a helical segment; sequence SLMFPILVAFGVFIPTLFCLC. At 275–276 the chain is on the cytoplasmic side; that stretch reads RL.

The protein belongs to the malectin family. Widely expressed throughout development including the anterior neuroectoderm and neural crest at stages 18 and 20, and the retina, hatching gland, otic vesicle, epibranchial placodes, pronephros and tail tip of later states. At stage 41, expressed in the liver, pancreas, branchial arches and proctodeum. Expressed broadly in adults in fat, intestine, gall bladder, eye, muscle, kidney, stomach, liver, heart, pancreas and lung.

Its subcellular location is the endoplasmic reticulum membrane. Functionally, carbohydrate-binding protein with a strong ligand preference for Glc2-N-glycan. May play a role in the early steps of protein N-glycosylation. Can bind di- or higher oligomers but not monomers of glucose, including maltose, maltotriose, maltotetraose, maltoheptaose, nigerose, kojibose, cellobiose and isomaltose, although based on their subcellular locations, these are unlikely to all be physiological ligands. In Xenopus laevis (African clawed frog), this protein is Malectin-A.